The following is a 161-amino-acid chain: Calcium-binding protein CML24 (161 aa).

EF-hand domains follow at residues 13–48 (GSMDDIKKVFQRFDKNGDGKISVDELKEVIRALSPT), 49–84 (ASPEETVTMMKQFDLDGNGFIDLDEFVALFQIGIGG), 90–125 (NDVSDLKEAFELYDLDGNGRISAKELHSVMKNLGEK), and 126–161 (CSVQDCKKMISKVDIDGDGCVNFDEFKKMMSNGGGA). Positions 26, 28, 30, 32, 37, 62, 64, 66, 73, 103, 105, 107, 109, 114, 139, 141, 143, 145, and 150 each coordinate Ca(2+).

In terms of tissue distribution, expressed in seed coat, seedling radical, cotyledons, hypocotyl, shoot apex and elongating root. Expressed in the vasculature of cotyledons, leaves and roots. Highly expressed in guard cells, trichomes and hydathodes. Expressed in inflorescence stem branch points, silique abscission zone, young and mature styles and stigmatic papillae, mature anthers and developing seed.

In terms of biological role, calcium-binding protein that may positively regulate abscisic acid (ABA) inhibition of germination and seedling development. May be required for photoperiod-induced flowering and function in ion homeostasis. This is Calcium-binding protein CML24 (CML24) from Arabidopsis thaliana (Mouse-ear cress).